We begin with the raw amino-acid sequence, 959 residues long: Leucine--tRNA ligase (959 aa).

The 'HIGH' region motif lies at 39–49 (PYVNAYPHLGS). The 'KMSKS' region motif lies at 637–641 (KMSKS). An ATP-binding site is contributed by Lys640. Positions 933–959 (TEEDGGSPRRANALPGRPALYAEKRGG) are disordered.

It belongs to the class-I aminoacyl-tRNA synthetase family.

Its subcellular location is the cytoplasm. The enzyme catalyses tRNA(Leu) + L-leucine + ATP = L-leucyl-tRNA(Leu) + AMP + diphosphate. This chain is Leucine--tRNA ligase, found in Aeropyrum pernix (strain ATCC 700893 / DSM 11879 / JCM 9820 / NBRC 100138 / K1).